Reading from the N-terminus, the 447-residue chain is ATP-dependent protease ATPase subunit HslU (447 aa).

ATP-binding positions include isoleucine 17, 59 to 64 (GVGKTE), aspartate 256, glutamate 321, and arginine 393.

This sequence belongs to the ClpX chaperone family. HslU subfamily. In terms of assembly, a double ring-shaped homohexamer of HslV is capped on each side by a ring-shaped HslU homohexamer. The assembly of the HslU/HslV complex is dependent on binding of ATP.

It localises to the cytoplasm. ATPase subunit of a proteasome-like degradation complex; this subunit has chaperone activity. The binding of ATP and its subsequent hydrolysis by HslU are essential for unfolding of protein substrates subsequently hydrolyzed by HslV. HslU recognizes the N-terminal part of its protein substrates and unfolds these before they are guided to HslV for hydrolysis. The polypeptide is ATP-dependent protease ATPase subunit HslU (Stutzerimonas stutzeri (strain A1501) (Pseudomonas stutzeri)).